Reading from the N-terminus, the 259-residue chain is Hydroxyacylglutathione hydrolase (259 aa).

Zn(2+)-binding residues include His-56, His-58, Asp-60, His-61, His-112, Asp-133, and His-171.

Belongs to the metallo-beta-lactamase superfamily. Glyoxalase II family. As to quaternary structure, monomer. Zn(2+) is required as a cofactor.

It catalyses the reaction an S-(2-hydroxyacyl)glutathione + H2O = a 2-hydroxy carboxylate + glutathione + H(+). Its pathway is secondary metabolite metabolism; methylglyoxal degradation; (R)-lactate from methylglyoxal: step 2/2. In terms of biological role, thiolesterase that catalyzes the hydrolysis of S-D-lactoyl-glutathione to form glutathione and D-lactic acid. The chain is Hydroxyacylglutathione hydrolase from Pseudomonas putida (strain GB-1).